A 103-amino-acid chain; its full sequence is Putative membrane protein insertion efficiency factor (103 aa).

It belongs to the UPF0161 family.

Its subcellular location is the cell membrane. Could be involved in insertion of integral membrane proteins into the membrane. In Clavibacter sepedonicus (Clavibacter michiganensis subsp. sepedonicus), this protein is Putative membrane protein insertion efficiency factor.